Reading from the N-terminus, the 158-residue chain is C-type lectin BiL (158 aa).

The N-terminal stretch at 1–23 (MGRFIFVSFGLLVVFLSLSGAKG) is a signal peptide. Intrachain disulfides connect Cys-26–Cys-37, Cys-54–Cys-154, Cys-61–Cys-156, and Cys-129–Cys-146. Residues 33-155 (MNGLCYKIFD…CESKNAFLCQ (123 aa)) form the C-type lectin domain. The Ca(2+) site is built by Gln-119, Asp-121, Glu-127, Asn-142, and Asp-143. Residues 119 to 121 (QPD) carry the Galactose-binding motif.

Homodimer; disulfide-linked. In terms of tissue distribution, expressed by the venom gland.

The protein localises to the secreted. Lectin with a hemagglutinating activity that is inhibited by galactose, lactose and EDTA. Is calcium-dependent. Shows effects on the renal function of isolated perfused rat kidneys by increasing both perfusion pressure (PP) and renal vascular resistance (RVR). In addition, the urinary flow and glomerular filtration rate (GFR) decreases significantly. The changes observed may reflect direct injury to the glomerular and tubular renal cells, and the rise in permeability in the glomerular endothelial cells, may be the effect of interactions of C-type lectin with endothelial cells or due to release of other mediators by mesangial, tubular and endothelial cells. The polypeptide is C-type lectin BiL (Bothrops insularis (Golden lancehead)).